Here is a 187-residue protein sequence, read N- to C-terminus: Calmodulin-like protein 30 (187 aa).

Positions 21-47 are disordered; the sequence is KPSRMFSRDRQSSGLSSPGPGGFSQPS. Low complexity predominate over residues 32-47; that stretch reads SSGLSSPGPGGFSQPS. 4 EF-hand domains span residues 46 to 81, 82 to 117, 129 to 152, and 153 to 187; these read PSVNEMRRVFSRFDLDKDGKISQTEYKVVLRALGQE, RAIEDVPKIFKAVDLDGDGFIDFREFIDAYKRSGGI, FDLNGDGKISAEEVMSVLWKLGER, and CSLEDCNRMVRAVDADGDGLVNMEEFIKMMSSNNV. Asp-59, Asp-61, Asp-63, Lys-65, Glu-70, Asp-95, Asp-97, Asp-99, Glu-106, Asp-130, Asn-132, Asp-134, Lys-136, Glu-141, Asp-166, Asp-168, Asp-170, and Glu-177 together coordinate Ca(2+).

Belongs to the calmodulin family.

Functionally, potential calcium sensor. This chain is Calmodulin-like protein 30, found in Arabidopsis thaliana (Mouse-ear cress).